A 589-amino-acid chain; its full sequence is Ubiquilin-1 (589 aa).

Residues 1 to 11 (MAESGESGGPP) show a composition bias toward gly residues. Disordered stretches follow at residues 1–35 (MAES…AEPK) and 110–145 (NRPQ…ATSN). At Ala-2 the chain carries N-acetylalanine. A compositionally biased stretch (low complexity) spans 12-35 (GSQDSAAGAEGAGAPAAAASAEPK). The Ubiquitin-like domain maps to 37 to 111 (MKVTVKTPKE…VHLVIKTQNR (75 aa)). Over residues 110 to 124 (NRPQDHSAQQTNTAG) the composition is skewed to polar residues. Positions 125–145 (SNVTTSSTPNSNSTSGSATSN) are enriched in low complexity. The segment at 178 to 428 (QLLSNPEMMV…LNNPLFAGNP (251 aa)) is interaction with UBXN4. 2 STI1 domains span residues 182–210 (NPEM…QLIM) and 212–251 (NPQM…MQEM). The interval 295–371 (PFASLVSNTS…NLVPGVGASM (77 aa)) is disordered. Polar residues predominate over residues 299–313 (LVSNTSSGEGSQPSR). The segment covering 327-360 (QTSQSSSASSGTASTVGGTTGSTASGTSGQSTTA) has biased composition (low complexity). STI1 domains are found at residues 387-434 (NPQL…QEQM) and 438-470 (LPTF…QQGL). The interval 488–520 (LGALGSTGGSSGTNGSNATPSENTSPTAGTTEP) is disordered. The span at 489 to 499 (GALGSTGGSSG) shows a compositional bias: gly residues. Over residues 509 to 520 (ENTSPTAGTTEP) the composition is skewed to polar residues. A UBA domain is found at 546 to 586 (RFQQQLEQPSAMGFLNREANLQALIATGGDINAAIERLLGS).

Monomer and homodimer. Heterodimer with UBQLN2. Binds CD47, NBL1, GABRA1, GABRA2, GABRA3, GABRA6, GABRB1, GABRB2 and GABRB3. Binds UBE3A, BTRC, P4HB and MTOR. Interacts with the proteasome 19S subunit. Interacts (via ubiquitin-like domain) with TREX1; the interaction is direct and may control TREX1 subcellular location. Forms a complex with UBXN4 and VCP. Interacts (via UBA domain) with UBQLN4 (via ubiquitin-like domain). Found in a complex with UBQLN2 and MAP1LC3A/B/C. The monomeric form interacts with PSEN1 and PSEN2. Interacts with ORAI1. Interacts (via UBA domain) with TICAM1. Interacts with EPS15. Interacts (via UBA domain) with UBA52 and (via ubiquitin-like domain) with PSMD3 and PSMD4. Interacts with HERPUD1. Interacts with MAP1LC3A/B/C in the presence of UBQLN4. Interacts (via ubiquitin-like domain) with EPS15 (via UIM domains) and both the ubiquitinated and non-ubiquitinated forms can interact with EPS15. Interacts (via ubiquitin-like domain) with EPS15L1, HGS (via UIM domain) and STAM2 (via UIM domain). Interacts with BCL2L10/BCL-B; in the cytoplasm. Post-translationally, degraded during both macroautophagy and during chaperone-mediated autophagy (CMA). Phosphorylated. In terms of processing, ubiquitinated.

Its subcellular location is the nucleus. It localises to the cytoplasm. The protein resides in the endoplasmic reticulum. The protein localises to the cytoplasmic vesicle. It is found in the autophagosome. Its subcellular location is the cell membrane. Plays an important role in the regulation of different protein degradation mechanisms and pathways including ubiquitin-proteasome system (UPS), autophagy and endoplasmic reticulum-associated protein degradation (ERAD) pathway. Mediates the proteasomal targeting of misfolded or accumulated proteins for degradation by binding (via UBA domain) to their polyubiquitin chains and by interacting (via ubiquitin-like domain) with the subunits of the proteasome. Plays a role in the ERAD pathway via its interaction with ER-localized proteins UBXN4, VCP and HERPUD1 and may form a link between the polyubiquitinated ERAD substrates and the proteasome. Plays a role in unfolded protein response (UPR) by attenuating the induction of UPR-inducible genes, DDTI3/CHOP, HSPA5 and PDIA2 during ER stress. Involved in the regulation of macroautophagy and autophagosome formation; required for maturation of autophagy-related protein LC3 from the cytosolic form LC3-I to the membrane-bound form LC3-II and may assist in the maturation of autophagosomes to autolysosomes by mediating autophagosome-lysosome fusion. Negatively regulates the TICAM1/TRIF-dependent toll-like receptor signaling pathway by decreasing the abundance of TICAM1 via the autophagic pathway. Promotes the ubiquitination and lysosomal degradation of ORAI1, consequently down-regulating the ORAI1-mediated Ca2+ mobilization. Suppresses the maturation and proteasomal degradation of amyloid beta A4 protein (A4) by stimulating the lysine 63 (K63)-linked polyubiquitination. Delays the maturation of A4 by sequestering it in the Golgi apparatus and preventing its transport to the cell surface for subsequent processing. Ubiquitinates BCL2L10 and thereby stabilizes protein abundance. This Pongo abelii (Sumatran orangutan) protein is Ubiquilin-1 (UBQLN1).